Consider the following 1129-residue polypeptide: Kinesin-like protein KIP1 (1129 aa).

The interval 1–49 (MLEQAEKLMKRNSSGAMSAPQSKPLARSRSSTMPTTTQKRVRSSQQSEG) is disordered. Polar residues-rich tracts occupy residues 11–21 (RNSSGAMSAPQ) and 28–48 (SRSS…QQSE). The Kinesin motor domain occupies 54 to 417 (NIKVYVRCRS…LEYATRAKSI (364 aa)). 139-146 (GQTGTGKT) lines the ATP pocket. Coiled coils occupy residues 422–513 (QVNQ…ELDV), 681–765 (LEKE…QKIV), and 919–948 (DDQR…TLVN).

This sequence belongs to the TRAFAC class myosin-kinesin ATPase superfamily. Kinesin family. BimC subfamily.

The protein localises to the cytoplasm. It localises to the cytoskeleton. It is found in the spindle. Functionally, required for assembly of the mitotic spindle. Interacts with spindle microtubules to produce an outwardly directed force acting upon the poles. Following spindle assembly, CIN8 and KIP1 apparently act to oppose a force that draws separated poles back together. This force seems to be mediate by KAR3. The chain is Kinesin-like protein KIP1 (KIP1) from Eremothecium gossypii (strain ATCC 10895 / CBS 109.51 / FGSC 9923 / NRRL Y-1056) (Yeast).